The following is a 388-amino-acid chain: Zinc finger C2H2 protein ECU10_0150 (388 aa).

The segment at 299–322 (YKCGFCGKAFESEKFIFNHFNNKH) adopts a C2H2-type zinc-finger fold.

The polypeptide is Zinc finger C2H2 protein ECU10_0150 (Encephalitozoon cuniculi (strain GB-M1) (Microsporidian parasite)).